Reading from the N-terminus, the 500-residue chain is uncharacterized protein (500 aa).

The signal sequence occupies residues 1–20 (MHSIIFKAAVALLGVSTAAG). An N-linked (GlcNAc...) asparagine glycan is attached at Asn43. The region spanning 60–232 (TALRPDCIIA…TAFTVKTHTQ (173 aa)) is the FAD-binding PCMH-type domain. His98 is subject to Pros-8alpha-FAD histidine. 5 N-linked (GlcNAc...) asparagine glycosylation sites follow: Asn194, Asn201, Asn246, Asn299, and Asn414.

The protein belongs to the oxygen-dependent FAD-linked oxidoreductase family. Requires FAD as cofactor.

The protein localises to the secreted. This is an uncharacterized protein from Arthroderma benhamiae (strain ATCC MYA-4681 / CBS 112371) (Trichophyton mentagrophytes).